A 93-amino-acid chain; its full sequence is Translation initiation factor IF-1 (93 aa).

Positions 1–72 (MAKEELIQFE…EKGRLIFRHK (72 aa)) constitute an S1-like domain. The tract at residues 70–93 (RHKDERPGGPPRSGPPRGGQFRRR) is disordered.

The protein belongs to the IF-1 family. In terms of assembly, component of the 30S ribosomal translation pre-initiation complex which assembles on the 30S ribosome in the order IF-2 and IF-3, IF-1 and N-formylmethionyl-tRNA(fMet); mRNA recruitment can occur at any time during PIC assembly.

It is found in the cytoplasm. One of the essential components for the initiation of protein synthesis. Stabilizes the binding of IF-2 and IF-3 on the 30S subunit to which N-formylmethionyl-tRNA(fMet) subsequently binds. Helps modulate mRNA selection, yielding the 30S pre-initiation complex (PIC). Upon addition of the 50S ribosomal subunit IF-1, IF-2 and IF-3 are released leaving the mature 70S translation initiation complex. The protein is Translation initiation factor IF-1 of Nitrobacter winogradskyi (strain ATCC 25391 / DSM 10237 / CIP 104748 / NCIMB 11846 / Nb-255).